The following is a 366-amino-acid chain: MFLSRPELIKKEIFDIAEYVPGKSIEEIASAYGLDPASIIKLGSNENPLGPSPKAVQAMMDTAPFANIYPSADAIELREALSRYTGFPVSNLIASGPGMDGLLDGLCRLVIEKGDEVIVPTPTFAYYELPARACGGKPVFVRRSQDFSIDPEKLLEATSSRTKIIFLCSPNNPSGNLLPEKDLRKVLENTRALVFVDEAYVEFADRNLAELVREYDNLVVGRTFSKVFGLAGLRLGYGIMPEWLAKEYIRAATPFSVSLPALKAGIAALSDVEHRKKSIEIAREGRKYLKEKIPFKVYPSQANFVLVDVSPLKAKAVTQSLMKKGIIVRSCDSFRDAGDTLIRATAGTLEQNEKVVRAFETAKKEV.

N6-(pyridoxal phosphate)lysine is present on K226.

This sequence belongs to the class-II pyridoxal-phosphate-dependent aminotransferase family. Histidinol-phosphate aminotransferase subfamily. Requires pyridoxal 5'-phosphate as cofactor.

The enzyme catalyses L-histidinol phosphate + 2-oxoglutarate = 3-(imidazol-4-yl)-2-oxopropyl phosphate + L-glutamate. Its pathway is amino-acid biosynthesis; L-histidine biosynthesis; L-histidine from 5-phospho-alpha-D-ribose 1-diphosphate: step 7/9. This is Histidinol-phosphate aminotransferase from Methanosarcina barkeri (strain Fusaro / DSM 804).